The chain runs to 298 residues: Lipoyl synthase (298 aa).

Positions 40, 45, 51, 67, 71, 74, and 280 each coordinate [4Fe-4S] cluster. The Radical SAM core domain occupies 53-269 (AVRRTATFMI…KEIAMQKGFS (217 aa)).

This sequence belongs to the radical SAM superfamily. Lipoyl synthase family. [4Fe-4S] cluster serves as cofactor.

The protein resides in the cytoplasm. The enzyme catalyses [[Fe-S] cluster scaffold protein carrying a second [4Fe-4S](2+) cluster] + N(6)-octanoyl-L-lysyl-[protein] + 2 oxidized [2Fe-2S]-[ferredoxin] + 2 S-adenosyl-L-methionine + 4 H(+) = [[Fe-S] cluster scaffold protein] + N(6)-[(R)-dihydrolipoyl]-L-lysyl-[protein] + 4 Fe(3+) + 2 hydrogen sulfide + 2 5'-deoxyadenosine + 2 L-methionine + 2 reduced [2Fe-2S]-[ferredoxin]. It functions in the pathway protein modification; protein lipoylation via endogenous pathway; protein N(6)-(lipoyl)lysine from octanoyl-[acyl-carrier-protein]. In terms of biological role, catalyzes the radical-mediated insertion of two sulfur atoms into the C-6 and C-8 positions of the octanoyl moiety bound to the lipoyl domains of lipoate-dependent enzymes, thereby converting the octanoylated domains into lipoylated derivatives. This Bacillus subtilis (strain 168) protein is Lipoyl synthase.